The sequence spans 50 residues: Insulin (50 aa).

3 cysteine pairs are disulfide-bonded: cysteine 7–cysteine 36, cysteine 19–cysteine 49, and cysteine 35–cysteine 40.

Belongs to the insulin family. Heterodimer of a B chain and an A chain linked by two disulfide bonds.

It localises to the secreted. Functionally, insulin decreases blood glucose concentration. It increases cell permeability to monosaccharides, amino acids and fatty acids. It accelerates glycolysis, the pentose phosphate cycle, and glycogen synthesis in liver. This Katsuwonus pelamis (Skipjack tuna) protein is Insulin (ins).